A 179-amino-acid chain; its full sequence is Large ribosomal subunit protein uL6 (179 aa).

This sequence belongs to the universal ribosomal protein uL6 family. As to quaternary structure, part of the 50S ribosomal subunit.

This protein binds to the 23S rRNA, and is important in its secondary structure. It is located near the subunit interface in the base of the L7/L12 stalk, and near the tRNA binding site of the peptidyltransferase center. The protein is Large ribosomal subunit protein uL6 of Acidobacterium capsulatum (strain ATCC 51196 / DSM 11244 / BCRC 80197 / JCM 7670 / NBRC 15755 / NCIMB 13165 / 161).